Reading from the N-terminus, the 439-residue chain is Skin secretory protein xP2 (439 aa).

Positions 1–22 are cleaved as a signal peptide; the sequence is MNHKLFCVHFLLLILSVCYIQG. Positions 25 to 351 are disordered; that stretch reads AGGEPAPAEG…VEVGPKTEDC (327 aa). Repeat copies occupy residues 26–33, 34–41, 42–51, 52–59, and 60–69. The interval 26–343 is 33 X approximate repeats of G-G(0,1)-[EV](0,1)-A-P-[A-P](1,3)-A-E; that stretch reads GGEPAPAEGV…APAPAPAPVE (318 aa). A compositionally biased stretch (low complexity) spans 26-345; the sequence is GGEPAPAEGV…APAPAPVEVG (320 aa). A 6; approximate repeat occupies 70 to 77; sequence GAEPAPAD. A run of 9 repeats spans residues 78-87, 88-97, 98-107, 108-115, 116-125, 126-135, 136-145, 146-153, and 154-163. The 16; approximate repeat unit spans residues 164-173; the sequence is VEAPAPAPAE. 14 consecutive repeat copies span residues 174–183, 184–193, 194–203, 204–215, 216–225, 226–235, 236–245, 246–255, 256–265, 266–275, 276–285, 286–293, 294–303, and 304–313. One copy of the 31; approximate repeat lies at 314-321; the sequence is GGAPSPAE. The stretch at 322 to 331 is one 32; approximate repeat; it reads GGAPAAAPAE. One copy of the 33; approximate repeat lies at 332 to 343; it reads GGAPAPAPAPVE. 2 P-type domains span residues 349 to 392 and 396 to 439; these read EDCK…FFPR and AQCL…FHQK. Intrachain disulfides connect C351/C377, C361/C376, C371/C388, C398/C424, C408/C423, and C418/C435.

In terms of tissue distribution, skin.

Its subcellular location is the secreted. May act as a growth factor in the germinal layer of the epidermis. May also be involved in growth of regenerating glands and in protection of the skin from the external environment. This Xenopus laevis (African clawed frog) protein is Skin secretory protein xP2 (p2).